Consider the following 579-residue polypeptide: MARSWSLLLLPFALALVASVAQAAVVEYTFNVGNLSISQLCQQEMIITAVNGQLPGPTIVATEGDTVVVHMVNESPYNMTIHWHGIFQRGTPWADGPAMVTQCPVRPGGNYTYRFNVTGQEGTLWWHSHFSFLRATVYGALIIKPRGGAKAYPFPVPDEEVVVILGEWWKTNVYDLQQRSLVTGNPAPHADAYTINGKPGDFYNCSAPNQTHKFELKQNKTYMLRIINAALNTPLFFKVANHSFNVVAADACYTKPYKTDVVVISPGQTVDALLVPDAGVAAAVGGRYYMAVIPYNSAVNAADPSFLYSLTNSTAIVEYGGGPATSPPMVPDMPEYNDTATAHRFLSNMTALVPNRVPLAVDTHMFVTVSMGDTFCGPEQTMCMPDDKGTIFASSMNNASFILPNTTSMLEAMYKGSIDGVYTRDFPDTPPIVFDYTADASDDNATLKHTFKSTKVKTLKYNSTVQMVLQNTRLVSKESHPMHLHGFNFFVLAQGFGNYNETTDPAKFNLVDPQERNTVAVPTGGWAVIRFVADNPGVWFMHCHFDAHLEFGLGMVFEVQNGPTQETSLPPPPSDLPQC.

The N-terminal stretch at 1-23 (MARSWSLLLLPFALALVASVAQA) is a signal peptide. 2 consecutive Plastocyanin-like domains span residues 31-148 (NVGN…PRGG) and 159-322 (EEVV…YGGG). N-linked (GlcNAc...) asparagine glycans are attached at residues Asn-34 and Asn-78. Residues His-82 and His-84 each coordinate Cu cation. Residues Asn-110 and Asn-116 are each glycosylated (N-linked (GlcNAc...) asparagine). Residues His-127 and His-129 each coordinate Cu cation. 11 N-linked (GlcNAc...) asparagine glycosylation sites follow: Asn-204, Asn-209, Asn-219, Asn-241, Asn-312, Asn-337, Asn-348, Asn-398, Asn-405, Asn-444, and Asn-462. The Plastocyanin-like 3 domain occupies 425–563 (DFPDTPPIVF…GMVFEVQNGP (139 aa)). Cu cation contacts are provided by His-480, His-483, and His-485. Residue Asn-500 is glycosylated (N-linked (GlcNAc...) asparagine). Residues His-542, Cys-543, His-544, and His-548 each coordinate Cu cation.

It belongs to the multicopper oxidase family. It depends on Cu cation as a cofactor.

The protein localises to the secreted. It is found in the extracellular space. It localises to the apoplast. It carries out the reaction 4 hydroquinone + O2 = 4 benzosemiquinone + 2 H2O. In terms of biological role, lignin degradation and detoxification of lignin-derived products. This Oryza sativa subsp. japonica (Rice) protein is Laccase-24 (LAC24).